Reading from the N-terminus, the 91-residue chain is Small integral membrane protein 12-B (91 aa).

Residues 12–34 (YAPYITFPVAFVVGAVGYQLEWF) form a helical membrane-spanning segment.

This sequence belongs to the SMIM12 family.

It is found in the membrane. In Xenopus laevis (African clawed frog), this protein is Small integral membrane protein 12-B (smim12-b).